The following is a 276-amino-acid chain: Large ribosomal subunit protein uL2 (276 aa).

The interval 224–265 is disordered; it reads GTAMNPIDHPHGGGEGKNFGKHPVSPWGVQTKGKRTRSNKRT.

This sequence belongs to the universal ribosomal protein uL2 family. Part of the 50S ribosomal subunit. Forms a bridge to the 30S subunit in the 70S ribosome.

Functionally, one of the primary rRNA binding proteins. Required for association of the 30S and 50S subunits to form the 70S ribosome, for tRNA binding and peptide bond formation. It has been suggested to have peptidyltransferase activity; this is somewhat controversial. Makes several contacts with the 16S rRNA in the 70S ribosome. This is Large ribosomal subunit protein uL2 from Blochmanniella floridana.